The sequence spans 427 residues: Glutamate-1-semialdehyde 2,1-aminomutase (427 aa).

Lys265 is subject to N6-(pyridoxal phosphate)lysine.

This sequence belongs to the class-III pyridoxal-phosphate-dependent aminotransferase family. HemL subfamily. As to quaternary structure, homodimer. It depends on pyridoxal 5'-phosphate as a cofactor.

It localises to the cytoplasm. The enzyme catalyses (S)-4-amino-5-oxopentanoate = 5-aminolevulinate. It participates in porphyrin-containing compound metabolism; protoporphyrin-IX biosynthesis; 5-aminolevulinate from L-glutamyl-tRNA(Glu): step 2/2. In Bordetella avium (strain 197N), this protein is Glutamate-1-semialdehyde 2,1-aminomutase.